A 299-amino-acid chain; its full sequence is Protein tantalus (299 aa).

The segment at 16–100 (KDNRSPTTNS…RSSTFGARAG (85 aa)) is disordered. The span at 20–35 (SPTTNSNLSWQLNQMA) shows a compositional bias: polar residues. Positions 53 to 69 (ESDDNVSSESHDSDDVD) are enriched in acidic residues. Residues 84–93 (CISGSSRRSS) are compositionally biased toward low complexity. 2 positions are modified to phosphoserine: Ser-204 and Ser-264.

Binds to DNA in vitro. Interacts directly with Asx. In terms of tissue distribution, ubiquitously expressed in precellularized embryos. Then it decreases at cellular blastoderm to increase again during germ band extension. During germ band extension, it is highly expressed in somatic and visceral mesoderm. Ubiquitously expressed in imaginal disks. In ovary, it is expressed from stage 10.

The protein resides in the nucleus. It localises to the cytoplasm. It is found in the chromosome. Its function is as follows. Potential cofactor involved in sensory organ development. Despite its interaction with the Polycomb group protein Asx, it does not regulate the expression of homeotic genes. This is Protein tantalus from Drosophila melanogaster (Fruit fly).